The primary structure comprises 506 residues: Anaerobic nitric oxide reductase transcription regulator NorR (506 aa).

Aspartate 57 carries the post-translational modification 4-aspartylphosphate. In terms of domain architecture, Sigma-54 factor interaction spans 187–416; it reads MIGLSPAMTQ…LEHAIHRAVV (230 aa). Residues 215–222 and 278–287 contribute to the ATP site; these read GETGTGKE and ADNGTLFLDE. Residues 481–500 constitute a DNA-binding region (H-T-H motif); it reads WAASARALETDVANLHRLAK.

The protein operates within nitrogen metabolism; nitric oxide reduction. Required for the expression of anaerobic nitric oxide (NO) reductase, acts as a transcriptional activator for at least the norVW operon. Activation also requires sigma-54. This Salmonella paratyphi A (strain ATCC 9150 / SARB42) protein is Anaerobic nitric oxide reductase transcription regulator NorR.